A 217-amino-acid polypeptide reads, in one-letter code: Probable nicotinate-nucleotide adenylyltransferase (217 aa).

The protein belongs to the NadD family.

It carries out the reaction nicotinate beta-D-ribonucleotide + ATP + H(+) = deamido-NAD(+) + diphosphate. It participates in cofactor biosynthesis; NAD(+) biosynthesis; deamido-NAD(+) from nicotinate D-ribonucleotide: step 1/1. In terms of biological role, catalyzes the reversible adenylation of nicotinate mononucleotide (NaMN) to nicotinic acid adenine dinucleotide (NaAD). The polypeptide is Probable nicotinate-nucleotide adenylyltransferase (Moorella thermoacetica (strain ATCC 39073 / JCM 9320)).